We begin with the raw amino-acid sequence, 411 residues long: Class E basic helix-loop-helix protein 40 (411 aa).

The disordered stretch occupies residues 1–21; the sequence is MERIPSAQPPPTCLPKTPGLE. Residues 1–139 are essential for interaction with BMAL1, E-box binding and repressor activity against the CLOCK-BMAL1 heterodimer; the sequence is MERIPSAQPP…LSGKNIEAGQ (139 aa). Residues 52–107 form the bHLH domain; that stretch reads TYKLPHRLIEKKRRDRINECIAQLKDLLPEHLKLTTLGHLEKAVVLELTLKHVKAL. The tract at residues 75-79 is necessary for interaction with RXRA and repressor activity against RXRA; that stretch reads LKDLL. The Orange domain occupies 142–175; that stretch reads FCSGFQTCAREVLQYLAKHENTRDLKSSQLVTHL. A Glycyl lysine isopeptide (Lys-Gly) (interchain with G-Cter in SUMO1, SUMO2 and SUMO3) cross-link involves residue K159. K167 is covalently cross-linked (Glycyl lysine isopeptide (Lys-Gly) (interchain with G-Cter in SUMO2)). The segment at 186–293 is disordered; the sequence is SASRKPLDSA…EPPTKKSRMQ (108 aa). At S235 the chain carries Phosphoserine. Over residues 248–271 the composition is skewed to basic and acidic residues; sequence ELEKGDLRSEQPYFKSDHGRRFTV. K279 is covalently cross-linked (Glycyl lysine isopeptide (Lys-Gly) (interchain with G-Cter in SUMO1); alternate). K279 is covalently cross-linked (Glycyl lysine isopeptide (Lys-Gly) (interchain with G-Cter in SUMO1, SUMO2 and SUMO3); alternate). A Glycyl lysine isopeptide (Lys-Gly) (interchain with G-Cter in SUMO2); alternate cross-link involves residue K279. K288 is covalently cross-linked (Glycyl lysine isopeptide (Lys-Gly) (interchain with G-Cter in SUMO2)). S383 carries the phosphoserine modification.

In terms of assembly, homodimer. Heterodimer with BHLHE41/DEC2. Interacts with TCF3/E47. Interacts with ubiquitin-conjugating enzyme UBE2I/UBC9. Interacts with HDAC1, SUMO1, RXRA and BMAL1. Ubiquitinated; which may lead to proteasomal degradation. In terms of processing, sumoylation inhibits its ubiquitination and promotes its negative regulation of the CLOCK-BMAL1 heterodimer transcriptional activator activity. In terms of tissue distribution, expressed in heart, spleen, lung, liver, muscle, kidney, uterus and gut. Highly expressed in the cerebral cortex, especially in the fifth layer, thalamus, superior colliculus, olfactory bulb, piriform cortex, hippocampus and hypothalamic nuclei.

It localises to the cytoplasm. The protein localises to the nucleus. Transcriptional repressor involved in the regulation of the circadian rhythm by negatively regulating the activity of the clock genes and clock-controlled genes. Acts as the negative limb of a novel autoregulatory feedback loop (DEC loop) which differs from the one formed by the PER and CRY transcriptional repressors (PER/CRY loop). Both these loops are interlocked as it represses the expression of PER1/2 and in turn is repressed by PER1/2 and CRY1/2. Represses the activity of the circadian transcriptional activator: CLOCK-BMAL1|BMAL2 heterodimer by competing for the binding to E-box elements (5'-CACGTG-3') found within the promoters of its target genes. Negatively regulates its own expression and the expression of DBP and BHLHE41/DEC2. Acts as a corepressor of RXR and the RXR-LXR heterodimers and represses the ligand-induced RXRA and NR1H3/LXRA transactivation activity. May be involved in the regulation of chondrocyte differentiation via the cAMP pathway. Represses the transcription of NR0B2 and attentuates the transactivation of NR0B2 by the CLOCK-BMAL1 complex. Drives the circadian rhythm of blood pressure through transcriptional repression of ATP1B1 in the cardiovascular system. The protein is Class E basic helix-loop-helix protein 40 (Bhlhe40) of Rattus norvegicus (Rat).